Reading from the N-terminus, the 402-residue chain is Omega-3 fatty acid desaturase fat-1 (402 aa).

Transmembrane regions (helical) follow at residues 79 to 99, 101 to 121, 235 to 255, and 260 to 280; these read LVQDFAALTILYFALPAFEYF, LFGYLVWNIFMGVFGFALFVV, CVISGICCCVCAYIALTIAGS, and FWYYWVPLSFFGLMLVIVTYL.

It belongs to the fatty acid desaturase type 1 family.

It is found in the membrane. The enzyme catalyses (9Z,12Z)-octadecadienoyl-CoA + 2 Fe(II)-[cytochrome b5] + O2 + 2 H(+) = (9Z,12Z,15Z)-octadecatrienoyl-CoA + 2 Fe(III)-[cytochrome b5] + 2 H2O. The catalysed reaction is (8Z,11Z,14Z)-eicosatrienoyl-CoA + 2 Fe(II)-[cytochrome b5] + O2 + 2 H(+) = (8Z,11Z,14Z,17Z)-eicosatetraenoyl-CoA + 2 Fe(III)-[cytochrome b5] + 2 H2O. It carries out the reaction (5Z,8Z,11Z,14Z)-eicosatetraenoyl-CoA + 2 Fe(II)-[cytochrome b5] + O2 + 2 H(+) = (5Z,8Z,11Z,14Z,17Z)-eicosapentaenoyl-CoA + 2 Fe(III)-[cytochrome b5] + 2 H2O. It catalyses the reaction (7Z,10Z,13Z,16Z)-docosatetraenoyl-CoA + 2 Fe(II)-[cytochrome b5] + O2 + 2 H(+) = (7Z,10Z,13Z,16Z,19Z)-docosapentaenoyl-CoA + 2 Fe(III)-[cytochrome b5] + 2 H2O. The enzyme catalyses (6Z,9Z,12Z)-octadecatrienoyl-CoA + 2 Fe(II)-[cytochrome b5] + O2 + 2 H(+) = (6Z,9Z,12Z,15Z)-octadecatetraenoyl-CoA + 2 Fe(III)-[cytochrome b5] + 2 H2O. The protein operates within lipid metabolism; polyunsaturated fatty acid biosynthesis. In terms of biological role, omega-3 fatty acid desaturase that recognizes a range of 18- and 20-carbon omega-6 substrates. Introduces a double bond in the fatty acid chain three carbons away from terminal methyl group to biosynthesize n-3 (omega-3) polyunsaturated fatty acids (PUFAs) endogenously (PUFAs are essential for membrane structure and many cellular and physiological processes). Acts on a number of substrates like linoleoyl-CoA ((9Z,12Z)-octadecadienoyl-CoA, 18:2n-6), dihomo-gamma-linolenoyl-CoA ((8Z,11Z,14Z)-eicosatrienoyl-CoA, 20:3n-6), and arachidonoyl-CoA ((5Z,8Z,11Z,14Z)-eicosatetraenoyl-CoA, 20:4n-6), to generate alpha-linolenoyl-CoA ((9Z,12Z,15Z)-octadecatrienoyl-CoA, 18:3n-3), (8Z,11Z,14Z,17Z)-eicosatetraenoyl-CoA (20:4n-3) and (5Z,8Z,11Z,14Z,17Z)-eicosapentaenoyl-CoA (20:5n-3) respectively. Unlike plants, Caenorhabditis elegans desaturases seem to use fatty acyl-CoAs as substrates. The sequence is that of Omega-3 fatty acid desaturase fat-1 (fat-1) from Caenorhabditis elegans.